We begin with the raw amino-acid sequence, 360 residues long: Mannose-1-phosphate guanylyltransferase catalytic subunit beta (360 aa).

Positions 2–222 are substrate-binding domain; the sequence is KALILVGGYG…QGFWMDIGQP (221 aa). D110 serves as a coordination point for GDP-alpha-D-mannose. Residue D110 coordinates Mg(2+). The active site involves K162. Residue D218 participates in GDP-alpha-D-mannose binding. D218 serves as a coordination point for Mg(2+). A hexapeptide repeat domain region spans residues 245-360; it reads HVGPGFIGNV…ESVPEPRIIM (116 aa).

This sequence belongs to the transferase hexapeptide repeat family. Component of the GMPPA-GMPPB mannose-1-phosphate guanylyltransferase complex composed of 4 gmppa subunits and 8 gmppb subunits; the complex is organized into three layers, a central layer made up of 2 gmppa dimers sandwiched between two layers each made up of 2 gmppb dimers. Catalytic activity of gmppb is reduced when part of the complex and binding of GDP-alpha-D-Mannose by gmppa induces allosteric feedback inhibition of gmppb. Mg(2+) is required as a cofactor.

It carries out the reaction alpha-D-mannose 1-phosphate + GTP + H(+) = GDP-alpha-D-mannose + diphosphate. The protein operates within nucleotide-sugar biosynthesis; GDP-alpha-D-mannose biosynthesis; GDP-alpha-D-mannose from alpha-D-mannose 1-phosphate (GTP route): step 1/1. With respect to regulation, enzyme activity is reduced by incorporation into the GMPPA-GMPPB mannose-1-phosphate guanylyltransferase complex. Allosterically inhibited, when part of the GMPPA-GMPPB complex, by GDP-alpha-D-mannose binding to GMPPA. Functionally, catalytic subunit of the GMPPA-GMPPB mannose-1-phosphate guanylyltransferase complex. Catalyzes the formation of GDP-mannose, an essential precursor of glycan moieties of glycoproteins and glycolipids. Can catalyze the reverse reaction in vitro. Together with GMPPA regulates GDP-alpha-D-mannose levels. The protein is Mannose-1-phosphate guanylyltransferase catalytic subunit beta (gmppb) of Xenopus tropicalis (Western clawed frog).